The primary structure comprises 341 residues: ATP-dependent 6-phosphofructokinase 3 (341 aa).

ATP-binding positions include Gly10, 72–73, and 102–105; these read RV and GEGT. Glu103 is a binding site for Mg(2+). Substrate-binding positions include 125 to 127, Arg162, 169 to 171, Glu222, Arg266, and 272 to 275; these read TID, MGR, and HVQR. The active-site Proton acceptor is Asp127.

It belongs to the phosphofructokinase type A (PFKA) family. Mixed-substrate PFK group III subfamily. Homodimer or homotetramer. It depends on Mg(2+) as a cofactor.

The protein resides in the cytoplasm. It catalyses the reaction beta-D-fructose 6-phosphate + ATP = beta-D-fructose 1,6-bisphosphate + ADP + H(+). It functions in the pathway carbohydrate degradation; glycolysis; D-glyceraldehyde 3-phosphate and glycerone phosphate from D-glucose: step 3/4. Its function is as follows. Catalyzes the phosphorylation of D-fructose 6-phosphate to fructose 1,6-bisphosphate by ATP, the first committing step of glycolysis. In Streptomyces coelicolor (strain ATCC BAA-471 / A3(2) / M145), this protein is ATP-dependent 6-phosphofructokinase 3.